Here is a 643-residue protein sequence, read N- to C-terminus: Fructose-1,6-bisphosphatase class 3 (643 aa).

The protein belongs to the FBPase class 3 family. Mn(2+) is required as a cofactor.

The enzyme catalyses beta-D-fructose 1,6-bisphosphate + H2O = beta-D-fructose 6-phosphate + phosphate. Its pathway is carbohydrate biosynthesis; gluconeogenesis. This is Fructose-1,6-bisphosphatase class 3 from Lacticaseibacillus casei (strain BL23) (Lactobacillus casei).